Reading from the N-terminus, the 141-residue chain is Galactose-6-phosphate isomerase subunit LacA (141 aa).

It belongs to the LacAB/RpiB family. Heteromultimeric protein consisting of LacA and LacB.

The enzyme catalyses aldehydo-D-galactose 6-phosphate = keto-D-tagatose 6-phosphate. Its pathway is carbohydrate metabolism; D-galactose 6-phosphate degradation; D-tagatose 6-phosphate from D-galactose 6-phosphate: step 1/1. The chain is Galactose-6-phosphate isomerase subunit LacA from Streptococcus pneumoniae (strain Taiwan19F-14).